A 467-amino-acid chain; its full sequence is ATP-dependent protease ATPase subunit HslU (467 aa).

Residues Val22 and Gly64–Glu69 each bind ATP. The disordered stretch occupies residues Lys146 to Ser185. The segment covering Asn168–Thr177 has biased composition (acidic residues). Asp280, Glu345, and Arg417 together coordinate ATP.

It belongs to the ClpX chaperone family. HslU subfamily. In terms of assembly, a double ring-shaped homohexamer of HslV is capped on each side by a ring-shaped HslU homohexamer. The assembly of the HslU/HslV complex is dependent on binding of ATP.

Its subcellular location is the cytoplasm. In terms of biological role, ATPase subunit of a proteasome-like degradation complex; this subunit has chaperone activity. The binding of ATP and its subsequent hydrolysis by HslU are essential for unfolding of protein substrates subsequently hydrolyzed by HslV. HslU recognizes the N-terminal part of its protein substrates and unfolds these before they are guided to HslV for hydrolysis. The polypeptide is ATP-dependent protease ATPase subunit HslU (Staphylococcus haemolyticus (strain JCSC1435)).